The chain runs to 313 residues: UDP-glucose 4-epimerase (313 aa).

NAD(+) is bound by residues 11–12, 31–36, 56–57, and 77–81; these read FI, DDLSSG, DI, and LAAQI. Residues S121 and Y146 each coordinate substrate. The NAD(+) site is built by Y146 and K150. The Proton acceptor role is filled by Y146. Substrate contacts are provided by residues N175, 189-190, 204-206, R213, and 271-274; these read VV, KIF, and RLGD.

The protein belongs to the NAD(P)-dependent epimerase/dehydratase family. Homodimer. The cofactor is NAD(+).

It catalyses the reaction UDP-alpha-D-glucose = UDP-alpha-D-galactose. The protein operates within carbohydrate metabolism; galactose metabolism. Functionally, involved in the metabolism of galactose. Catalyzes the conversion of UDP-galactose (UDP-Gal) to UDP-glucose (UDP-Glc) through a mechanism involving the transient reduction of NAD. In Mycolicibacterium smegmatis (strain ATCC 700084 / mc(2)155) (Mycobacterium smegmatis), this protein is UDP-glucose 4-epimerase.